We begin with the raw amino-acid sequence, 209 residues long: MTKKPIVVGVTGGSGSGKTSVTKAICDHFSGHSILMIAQDVYYHDQTDISFEDRLKVNYDHPLAFDTDLLISHIAALRRYETIEKPIYDYEKYTRKQEVEIQEPREVIILEGILILEDKRLRDLMDIKVYVDTDDDIRFIRRLLRDMKERGRTMDSVIDQYLSVVKPMHNEFIEPTKKFADIIIPEGGENHVAIDLMTTKIESILQKHV.

12 to 19 (GGSGSGKT) lines the ATP pocket.

It belongs to the uridine kinase family.

Its subcellular location is the cytoplasm. The catalysed reaction is uridine + ATP = UMP + ADP + H(+). It catalyses the reaction cytidine + ATP = CMP + ADP + H(+). Its pathway is pyrimidine metabolism; CTP biosynthesis via salvage pathway; CTP from cytidine: step 1/3. The protein operates within pyrimidine metabolism; UMP biosynthesis via salvage pathway; UMP from uridine: step 1/1. This chain is Uridine kinase, found in Listeria welshimeri serovar 6b (strain ATCC 35897 / DSM 20650 / CCUG 15529 / CIP 8149 / NCTC 11857 / SLCC 5334 / V8).